We begin with the raw amino-acid sequence, 345 residues long: tRNA N6-adenosine threonylcarbamoyltransferase (345 aa).

2 residues coordinate Fe cation: His-117 and His-121. Substrate is bound by residues 140–144 (LVSGG), Asp-173, Gly-186, and Asn-279. Fe cation is bound at residue Asp-307.

It belongs to the KAE1 / TsaD family. The cofactor is Fe(2+).

It is found in the cytoplasm. The catalysed reaction is L-threonylcarbamoyladenylate + adenosine(37) in tRNA = N(6)-L-threonylcarbamoyladenosine(37) in tRNA + AMP + H(+). Functionally, required for the formation of a threonylcarbamoyl group on adenosine at position 37 (t(6)A37) in tRNAs that read codons beginning with adenine. Is involved in the transfer of the threonylcarbamoyl moiety of threonylcarbamoyl-AMP (TC-AMP) to the N6 group of A37, together with TsaE and TsaB. TsaD likely plays a direct catalytic role in this reaction. This chain is tRNA N6-adenosine threonylcarbamoyltransferase, found in Verminephrobacter eiseniae (strain EF01-2).